The chain runs to 650 residues: Fructose-1,6-bisphosphatase class 3 (650 aa).

The protein belongs to the FBPase class 3 family. Mn(2+) serves as cofactor.

The enzyme catalyses beta-D-fructose 1,6-bisphosphate + H2O = beta-D-fructose 6-phosphate + phosphate. Its pathway is carbohydrate biosynthesis; gluconeogenesis. This is Fructose-1,6-bisphosphatase class 3 from Finegoldia magna (strain ATCC 29328 / DSM 20472 / WAL 2508) (Peptostreptococcus magnus).